The following is a 328-amino-acid chain: 4-hydroxythreonine-4-phosphate dehydrogenase (328 aa).

Substrate-binding residues include histidine 135 and threonine 136. A divalent metal cation contacts are provided by histidine 165, histidine 210, and histidine 265. 3 residues coordinate substrate: lysine 273, asparagine 282, and arginine 291.

The protein belongs to the PdxA family. As to quaternary structure, homodimer. Zn(2+) is required as a cofactor. It depends on Mg(2+) as a cofactor. Co(2+) serves as cofactor.

It is found in the cytoplasm. It carries out the reaction 4-(phosphooxy)-L-threonine + NAD(+) = 3-amino-2-oxopropyl phosphate + CO2 + NADH. Its pathway is cofactor biosynthesis; pyridoxine 5'-phosphate biosynthesis; pyridoxine 5'-phosphate from D-erythrose 4-phosphate: step 4/5. In terms of biological role, catalyzes the NAD(P)-dependent oxidation of 4-(phosphooxy)-L-threonine (HTP) into 2-amino-3-oxo-4-(phosphooxy)butyric acid which spontaneously decarboxylates to form 3-amino-2-oxopropyl phosphate (AHAP). This is 4-hydroxythreonine-4-phosphate dehydrogenase from Enterobacter sp. (strain 638).